The sequence spans 417 residues: Phosphoglycerate kinase 1 (417 aa).

Ser2 carries the N-acetylserine modification. 2 positions are modified to phosphoserine: Ser2 and Ser4. At Lys6 the chain carries N6-succinyllysine. Lys11 bears the N6-acetyllysine mark. (2R)-3-phosphoglycerate contacts are provided by Val23, Asp24, Phe25, Asn26, Gln38, and Arg39. Residues 38 to 43 (QRIKAA) form a mitochondrial targeting region exposed following cis-trans isomerization by PIN1 and recognized by the TOM complex for mitochondrial translocation of the protein region. Lys48 is modified (N6-acetyllysine; alternate). Lys48 is subject to N6-succinyllysine; alternate. 4 residues coordinate (2R)-3-phosphoglycerate: Ser62, His63, Gly65, and Arg66. Residue Lys75 is modified to N6-acetyllysine. Tyr76 bears the Phosphotyrosine mark. An N6-acetyllysine mark is found at Lys86 and Lys91. Lys97 bears the N6-acetyllysine; alternate mark. N6-(2-hydroxyisobutyryl)lysine; alternate is present on Lys97. (2R)-3-phosphoglycerate contacts are provided by Leu122 and Arg123. At Lys131 the chain carries N6-acetyllysine; alternate. Position 131 is an N6-malonyllysine; alternate (Lys131). At Lys146 the chain carries N6-acetyllysine. His170 and Arg171 together coordinate (2R)-3-phosphoglycerate. Lys191 is subject to N6-succinyllysine. Tyr196 carries the post-translational modification Phosphotyrosine. Lys199 is modified (N6-acetyllysine). Ser203 is modified (phosphoserine). Gly214 contributes to the ADP binding site. Position 214 (Gly214) interacts with CDP. 2 residues coordinate AMP: Ala215 and Lys216. Residue Ala215 participates in ATP binding. Ala215 is a Mg(2+) binding site. An N6-(2-hydroxyisobutyryl)lysine modification is found at Lys216. Ala218 and Asp219 together coordinate Mg(2+). CDP is bound at residue Asp219. Lys220 contacts AMP. Lys220 contributes to the ATP binding site. Lys220 is subject to N6-(2-hydroxyisobutyryl)lysine. Position 238 (Gly238) interacts with ADP. Gly238 is a CDP binding site. Gly239 is a binding site for AMP. Position 239 (Gly239) interacts with ATP. Lys267 and Lys291 each carry N6-acetyllysine. Gly313 serves as a coordination point for AMP. Gly313 provides a ligand contact to ATP. N6-(2-hydroxyisobutyryl)lysine is present on Lys323. Residues Gly338, Val340, and Phe343 each contribute to the CDP site. Phe343 contributes to the ADP binding site. Glu344 is an AMP binding site. Glu344 is an ATP binding site. Position 361 is an N6-acetyllysine (Lys361). Residues Asp375 and Thr376 each contribute to the ATP site. A Mg(2+)-binding site is contributed by Asp375.

Belongs to the phosphoglycerate kinase family. As to quaternary structure, monomer. Interacts with kinase MAPK1/ERK2; the interaction is direct, occurs under hypoxic conditions, and promotes its interaction with PIN1. Interacts with peptidyl-prolyl cis-trans isomerase PIN1; the interaction is direct, occurs under hypoxic conditions, and targets the protein to the mitochondrion by promoting interactions with the TOM complex. Interacts with mitochondrial circRNA mcPGK1 (via its 2nd stem-loop); the interaction is direct and targets the protein to the mitochondrion by promoting interactions with the TOM complex. Interacts with pyruvate dehydrogenase kinase PDK1; the interaction is direct, occurs under hypoxic conditions and leads to PDK1-mediated inhibition of pyruvate dehydrogenase complex activity. It depends on Mg(2+) as a cofactor. Post-translationally, phosphorylated at Ser-203 by MAPK1/ERK2 under hypoxic conditions, which promotes its mitochondrial targeting.

The protein resides in the cytoplasm. It localises to the cytosol. Its subcellular location is the mitochondrion matrix. The enzyme catalyses (2R)-3-phosphoglycerate + ATP = (2R)-3-phospho-glyceroyl phosphate + ADP. The catalysed reaction is L-seryl-[protein] + ATP = O-phospho-L-seryl-[protein] + ADP + H(+). The protein operates within carbohydrate degradation; glycolysis; pyruvate from D-glyceraldehyde 3-phosphate: step 2/5. Its function is as follows. Catalyzes one of the two ATP producing reactions in the glycolytic pathway via the reversible conversion of 1,3-diphosphoglycerate to 3-phosphoglycerate. Both L- and D- forms of purine and pyrimidine nucleotides can be used as substrates, but the activity is much lower on pyrimidines. In addition to its role as a glycolytic enzyme, it seems that PGK-1 acts as a polymerase alpha cofactor protein (primer recognition protein). Acts as a protein kinase when localized to the mitochondrion where it phosphorylates pyruvate dehydrogenase kinase PDK1 to inhibit pyruvate dehydrogenase complex activity and suppress the formation of acetyl-coenzyme A from pyruvate, and consequently inhibit oxidative phosphorylation and promote glycolysis. May play a role in sperm motility. This is Phosphoglycerate kinase 1 (PGK1) from Cricetulus griseus (Chinese hamster).